A 61-amino-acid chain; its full sequence is UPF0434 protein Pmen_1615 (61 aa).

It belongs to the UPF0434 family.

The chain is UPF0434 protein Pmen_1615 from Ectopseudomonas mendocina (strain ymp) (Pseudomonas mendocina).